The sequence spans 549 residues: O-fucosyltransferase 29 (549 aa).

Residues Thr43 to Phe63 traverse the membrane as a helical; Signal-anchor for type II membrane protein segment. N-linked (GlcNAc...) asparagine glycosylation is present at Asn152. His292 to Arg294 contacts substrate. Residues Asn359 and Asn527 are each glycosylated (N-linked (GlcNAc...) asparagine). Residues Pro506–Asp549 are disordered. Residues Asp540–Asp549 are compositionally biased toward basic and acidic residues.

It belongs to the glycosyltransferase GT106 family.

It is found in the membrane. The protein operates within glycan metabolism. The sequence is that of O-fucosyltransferase 29 from Arabidopsis thaliana (Mouse-ear cress).